Reading from the N-terminus, the 152-residue chain is 3-hydroxyacyl-[acyl-carrier-protein] dehydratase FabZ (152 aa).

Residue H57 is part of the active site.

The protein belongs to the thioester dehydratase family. FabZ subfamily.

It localises to the cytoplasm. It carries out the reaction a (3R)-hydroxyacyl-[ACP] = a (2E)-enoyl-[ACP] + H2O. In terms of biological role, involved in unsaturated fatty acids biosynthesis. Catalyzes the dehydration of short chain beta-hydroxyacyl-ACPs and long chain saturated and unsaturated beta-hydroxyacyl-ACPs. The protein is 3-hydroxyacyl-[acyl-carrier-protein] dehydratase FabZ of Xanthomonas axonopodis pv. citri (strain 306).